The following is a 441-amino-acid chain: Homogentisate 1,2-dioxygenase (441 aa).

The Proton acceptor role is filled by His-287. Fe cation is bound by residues His-330 and Glu-336. 2 residues coordinate homogentisate: Tyr-345 and His-366. A Fe cation-binding site is contributed by His-366.

The protein belongs to the homogentisate dioxygenase family. Hexamer; dimer of trimers. It depends on Fe cation as a cofactor.

It catalyses the reaction homogentisate + O2 = 4-maleylacetoacetate + H(+). It functions in the pathway amino-acid degradation; L-phenylalanine degradation; acetoacetate and fumarate from L-phenylalanine: step 4/6. Functionally, involved in the catabolism of homogentisate (2,5-dihydroxyphenylacetate or 2,5-OH-PhAc), a central intermediate in the degradation of phenylalanine and tyrosine. Catalyzes the oxidative ring cleavage of the aromatic ring of homogentisate to yield maleylacetoacetate. The protein is Homogentisate 1,2-dioxygenase of Xanthomonas oryzae pv. oryzae (strain MAFF 311018).